The following is a 331-amino-acid chain: Glucan endo-1,3-beta-glucosidase, acidic isoform GL161 (331 aa).

The signal sequence occupies residues 1 to 9 (MCSIQIIGA). Gln10 is subject to Pyrrolidone carboxylic acid. N-linked (GlcNAc...) asparagine glycosylation is found at Asn55 and Asn75. Residue Glu244 is the Nucleophile of the active site.

Belongs to the glycosyl hydrolase 17 family. Is expressed primarily in epidermal cell of healthy plant, and following induction by ethylene, accumulates in mesophyll cells.

The protein localises to the secreted. It is found in the extracellular space. The enzyme catalyses Hydrolysis of (1-&gt;3)-beta-D-glucosidic linkages in (1-&gt;3)-beta-D-glucans.. Is thought to be an important plant defense-related product against fungal pathogens. The protein is Glucan endo-1,3-beta-glucosidase, acidic isoform GL161 of Nicotiana tabacum (Common tobacco).